The sequence spans 119 residues: MSRVKRGVTAHARHKKVLARAKGFRGQRKSNYRIAHQAVMKALTYEYRDRRTKKRDFRSLWIVRINAAARSEGVTYSRFMNGLLRAGIQLDRKVLADIAVRDKAAFSRLVEVVKGQLAA.

It belongs to the bacterial ribosomal protein bL20 family.

Binds directly to 23S ribosomal RNA and is necessary for the in vitro assembly process of the 50S ribosomal subunit. It is not involved in the protein synthesizing functions of that subunit. This chain is Large ribosomal subunit protein bL20, found in Acidithiobacillus ferrooxidans (strain ATCC 23270 / DSM 14882 / CIP 104768 / NCIMB 8455) (Ferrobacillus ferrooxidans (strain ATCC 23270)).